The sequence spans 41 residues: Large ribosomal subunit protein bL36A (41 aa).

Belongs to the bacterial ribosomal protein bL36 family.

The protein is Large ribosomal subunit protein bL36A of Vibrio cholerae serotype O1 (strain ATCC 39541 / Classical Ogawa 395 / O395).